The chain runs to 253 residues: Adapter protein MecA (253 aa).

It belongs to the MecA family. In terms of assembly, homodimer.

Functionally, enables the recognition and targeting of unfolded and aggregated proteins to the ClpC protease or to other proteins involved in proteolysis. The polypeptide is Adapter protein MecA (Streptococcus pyogenes serotype M6 (strain ATCC BAA-946 / MGAS10394)).